The primary structure comprises 421 residues: MGMTIAEKILAAHAGKKEVTPGEIINAKVDIVLANDITAPIAIKEFEKLGVKDVFDRERIALVPDHFTPQKDIKAAEQCKMLREFAQKYKIKHYFEIGRVGIEHALLPEEGIVLPGDLVIGADSHTCTYGALGAFATGVGSTDAAIAMATGECWFKVPETIKFIYYGKLQKWVSGKDLILYTIGDIGVDGASYMAMEFIGEVIDNMPMSGRFSMCNMAIEAGAKAGIIVPDKITEEYVKLRAKRPYKIYNSDQDAKYFEIKEYDCSRIPPVVACPHLPSNVKPANELSHIKIDQVVIGSCTNGRLEDLREAAMVLKGRKVHPEVRMIIIPATQKIYMQALKEGLIEIFIDAQAVVSPPTCGPCLGGHMGILAKGERAIATTNRNFVGRMGHPESEVYLSNPAVAAASGVLGRIGTPEELGL.

[4Fe-4S] cluster-binding residues include cysteine 300, cysteine 360, and cysteine 363.

The protein belongs to the aconitase/IPM isomerase family. LeuC type 2 subfamily. In terms of assembly, heterodimer of LeuC and LeuD. [4Fe-4S] cluster serves as cofactor.

It catalyses the reaction (2R,3S)-3-isopropylmalate = (2S)-2-isopropylmalate. The protein operates within amino-acid biosynthesis; L-leucine biosynthesis; L-leucine from 3-methyl-2-oxobutanoate: step 2/4. Catalyzes the isomerization between 2-isopropylmalate and 3-isopropylmalate, via the formation of 2-isopropylmaleate. This chain is 3-isopropylmalate dehydratase large subunit, found in Thermodesulfovibrio yellowstonii (strain ATCC 51303 / DSM 11347 / YP87).